Reading from the N-terminus, the 330-residue chain is Ketol-acid reductoisomerase (NADP(+)) (330 aa).

Residues 2–182 enclose the KARI N-terminal Rossmann domain; that stretch reads VKVYYDADAN…GCTKAGVFET (181 aa). NADP(+)-binding positions include 25-28, Arg-48, Ser-51, and 83-86; these read YGSQ and DEIQ. The active site involves His-108. Gly-134 is an NADP(+) binding site. In terms of domain architecture, KARI C-terminal knotted spans 183–328; sequence SFREETETDL…ARLREMMPWL (146 aa). Positions 191, 195, 227, and 231 each coordinate Mg(2+). Ser-252 contributes to the substrate binding site.

It belongs to the ketol-acid reductoisomerase family. Requires Mg(2+) as cofactor.

The enzyme catalyses (2R)-2,3-dihydroxy-3-methylbutanoate + NADP(+) = (2S)-2-acetolactate + NADPH + H(+). It catalyses the reaction (2R,3R)-2,3-dihydroxy-3-methylpentanoate + NADP(+) = (S)-2-ethyl-2-hydroxy-3-oxobutanoate + NADPH + H(+). The protein operates within amino-acid biosynthesis; L-isoleucine biosynthesis; L-isoleucine from 2-oxobutanoate: step 2/4. It functions in the pathway amino-acid biosynthesis; L-valine biosynthesis; L-valine from pyruvate: step 2/4. Involved in the biosynthesis of branched-chain amino acids (BCAA). Catalyzes an alkyl-migration followed by a ketol-acid reduction of (S)-2-acetolactate (S2AL) to yield (R)-2,3-dihydroxy-isovalerate. In the isomerase reaction, S2AL is rearranged via a Mg-dependent methyl migration to produce 3-hydroxy-3-methyl-2-ketobutyrate (HMKB). In the reductase reaction, this 2-ketoacid undergoes a metal-dependent reduction by NADPH to yield (R)-2,3-dihydroxy-isovalerate. The polypeptide is Ketol-acid reductoisomerase (NADP(+)) (Desulforamulus reducens (strain ATCC BAA-1160 / DSM 100696 / MI-1) (Desulfotomaculum reducens)).